Reading from the N-terminus, the 79-residue chain is Translational regulator CsrA (79 aa).

It belongs to the CsrA/RsmA family. Homodimer; the beta-strands of each monomer intercalate to form a hydrophobic core, while the alpha-helices form wings that extend away from the core.

It is found in the cytoplasm. In terms of biological role, a translational regulator that binds mRNA to regulate translation initiation and/or mRNA stability. Usually binds in the 5'-UTR at or near the Shine-Dalgarno sequence preventing ribosome-binding, thus repressing translation. Its main target seems to be the major flagellin gene, while its function is anatagonized by FliW. This is Translational regulator CsrA from Helicobacter hepaticus (strain ATCC 51449 / 3B1).